We begin with the raw amino-acid sequence, 260 residues long: Ribosomal RNA small subunit methyltransferase A (260 aa).

6 residues coordinate S-adenosyl-L-methionine: Asn-16, Leu-18, Gly-43, Glu-64, Asp-86, and Asn-108.

The protein belongs to the class I-like SAM-binding methyltransferase superfamily. rRNA adenine N(6)-methyltransferase family. RsmA subfamily.

It is found in the cytoplasm. The catalysed reaction is adenosine(1518)/adenosine(1519) in 16S rRNA + 4 S-adenosyl-L-methionine = N(6)-dimethyladenosine(1518)/N(6)-dimethyladenosine(1519) in 16S rRNA + 4 S-adenosyl-L-homocysteine + 4 H(+). In terms of biological role, specifically dimethylates two adjacent adenosines (A1518 and A1519) in the loop of a conserved hairpin near the 3'-end of 16S rRNA in the 30S particle. May play a critical role in biogenesis of 30S subunits. The chain is Ribosomal RNA small subunit methyltransferase A from Buchnera aphidicola subsp. Baizongia pistaciae (strain Bp).